A 151-amino-acid polypeptide reads, in one-letter code: Ribosome maturation factor RimP (151 aa).

Belongs to the RimP family.

The protein resides in the cytoplasm. Functionally, required for maturation of 30S ribosomal subunits. The protein is Ribosome maturation factor RimP of Hydrogenovibrio crunogenus (strain DSM 25203 / XCL-2) (Thiomicrospira crunogena).